The sequence spans 1006 residues: Cytosolic carboxypeptidase 3 (1006 aa).

The region spanning 304–576 (YPYTYSNLQE…HFCDSLLDYC (273 aa)) is the Peptidase M14 domain. Zn(2+)-binding residues include His368, Glu371, and His464. The Proton donor/acceptor role is filled by Glu540. Residues 790-810 (ESHHQLKSKAKRCSSFQSKRT) form a disordered region.

This sequence belongs to the peptidase M14 family. The cofactor is Zn(2+). As to expression, widely expressed. Expressed abundantly in tissues with m otile cilia such as testis, lung and trachea. Abundantly expressed in pituitary and kidney, moderately expressed in brain, eye, fat, pancreas, stomach, and adrenal.

Its subcellular location is the cytoplasm. It localises to the cytosol. The catalysed reaction is (L-glutamyl)(n+1)-gamma-L-glutamyl-L-glutamyl-[protein] + H2O = (L-glutamyl)(n)-gamma-L-glutamyl-L-glutamyl-[protein] + L-glutamate. In terms of biological role, metallocarboxypeptidase that mediates deglutamylation of tubulin and non-tubulin target proteins. Catalyzes the removal of polyglutamate side chains present on the gamma-carboxyl group of glutamate residues within the C-terminal tail of tubulin protein. Specifically cleaves tubulin long-side-chains, while it is not able to remove the branching point glutamate. Also catalyzes the removal of polyglutamate residues from the carboxy-terminus of non-tubulin proteins such as MYLK. May catalyze the hydrolysis of aspartate from the carboxy-terminus of target proteins. Does not show detyrosinase or deglycylase activities from the carboxy-terminus of target proteins. This chain is Cytosolic carboxypeptidase 3, found in Mus musculus (Mouse).